A 147-amino-acid chain; its full sequence is Pathogenesis-related protein PR-4A (147 aa).

An N-terminal signal peptide occupies residues 1–25; that stretch reads MERVNNYKLCVALLIISMVMAMAAA. The region spanning 26–147 is the Barwin domain; sequence QSATNVRSTY…VNYEFVNCND (122 aa). 3 disulfide bridges follow: C54-C86, C75-C109, and C89-C145.

It is found in the secreted. The protein localises to the cell wall. The sequence is that of Pathogenesis-related protein PR-4A from Nicotiana tabacum (Common tobacco).